The primary structure comprises 127 residues: uncharacterized protein (127 aa).

This is an uncharacterized protein from Acidianus two-tailed virus (ATV).